We begin with the raw amino-acid sequence, 455 residues long: Putative O-acetyltransferase SAT14 (455 aa).

This sequence belongs to the lysine N-acyltransferase MbtK family.

The protein operates within mycotoxin biosynthesis. Its function is as follows. Putative O-acetyltransferase; part of the satratoxin SC2 cluster involved in the biosynthesis of satratoxins, trichothecene mycotoxins that are associated with human food poisonings. Satratoxins are suggested to be made by products of multiple gene clusters (SC1, SC2 and SC3) that encode 21 proteins in all, including polyketide synthases, acetyltransferases, and other enzymes expected to modify the trichothecene skeleton. SC1 encodes 10 proteins, SAT1 to SAT10. The largest are SAT8, which encodes a putative polyketide synthase (PKS) with a conventional non-reducing architecture, and SAT10, a putative protein containing four ankyrin repeats and thus may be involved in protein scaffolding. The putative short-chain reductase SAT3 may assist the PKS in some capacity. SAT6 contains a secretory lipase domain and acts probably as a trichothecene esterase. SAT5 encodes a putative acetyltransferase, and so, with SAT6, may affect endogenous protection from toxicity. The probable transcription factor SAT9 may regulate the expression of the SC1 cluster. SC2 encodes proteins SAT11 to SAT16, the largest of which encodes the putative reducing PKS SAT13. SAT11 is a cytochrome P450 monooxygenase, while SAT14 and SAT16 are probable acetyltransferases. The SC2 cluster may be regulated by the transcription factor SAT15. SC3 is a small cluster that encodes 5 proteins, SAT17 to SAT21. SAT21 is a putative MFS-type transporter which may have a role in exporting secondary metabolites. The four other proteins putatively encoded in SC3 include the taurine hydroxylase-like protein SAT17, the O-methyltransferase SAT18, the acetyltransferase SAT19, and the Cys6-type zinc finger SAT20, the latter being probably involved in regulation of SC3 expression. This Stachybotrys chartarum (strain CBS 109288 / IBT 7711) (Toxic black mold) protein is Putative O-acetyltransferase SAT14.